We begin with the raw amino-acid sequence, 497 residues long: Di-/tripeptide transporter (497 aa).

Over 1–36 (MQNLNKTEKTFFGQPRGLLTLFQTEFWERFSYYGMR) the chain is Cytoplasmic. Residues 37-55 (AILVYYLYALTTADNAGLG) traverse the membrane as a helical segment. The Extracellular portion of the chain corresponds to 56–64 (LPKAQAMAI). Residues 65–83 (VSIYGALVYLSTIVGGWVA) form a helical membrane-spanning segment. The Cytoplasmic portion of the chain corresponds to 84 to 92 (DRLLGASRT). Residues 93–111 (IFLGGILITLGHVALATPF) traverse the membrane as a helical segment. The Extracellular portion of the chain corresponds to 112-115 (GLSS). A helical transmembrane segment spans residues 116–134 (LFVALFLIILGTGMLKPNI). Residues 135–154 (SNMVGHLYSKDDSRRDTGFN) lie on the Cytoplasmic side of the membrane. Residues 155–173 (IFVVGINMGSLIAPLIVGT) form a helical membrane-spanning segment. Over 174–181 (VGQGVNYH) the chain is Extracellular. The chain crosses the membrane as a helical span at residues 182–200 (LGFSLAAIGMIFALFAYWY). Residues 201-224 (GRLRHFPEIGREPSNPMDAKAKRN) lie on the Cytoplasmic side of the membrane. A helical membrane pass occupies residues 225–243 (FIITLTIVLIVALIGFFLI). Residues 244-254 (YQASPANFINN) are Extracellular-facing. The chain crosses the membrane as a helical span at residues 255–273 (FINVLSIIGIVVPIIYFVM). The Cytoplasmic segment spans residues 274-293 (MFTSKKVESDERRKLTAYIP). A helical transmembrane segment spans residues 294–312 (LFLSAIVFWAIEEQSSTII). Residues 313–335 (AVWGESRSNLNPTWFGFTFHIDP) are Extracellular-facing. The helical transmembrane segment at 336-354 (SWYQLLNPLFIVLLSPIFV) threads the bilayer. Topologically, residues 355–372 (RIWNKLGDRQPSTIVKFG) are cytoplasmic. The chain crosses the membrane as a helical span at residues 373–391 (LGLMLTGASYLIMTLPGLL). Over 392–425 (NGTSGRASALWLVLMFAVQMAGELLVSPVGLSVS) the chain is Extracellular. Residues 426–444 (TKLAPVAFQSQMMAMWFLA) form a helical membrane-spanning segment. Residues 445–497 (DSTSQAINAQITPIFKAATEVHFFAITGIIGIIVGIILLIIKKPILKLMGDVR) are Cytoplasmic-facing.

This sequence belongs to the major facilitator superfamily. Proton-dependent oligopeptide transporter (POT/PTR) (TC 2.A.17) family.

The protein resides in the cell membrane. Proton-dependent uptake of di- or tri-peptides. The polypeptide is Di-/tripeptide transporter (dtpT) (Lactococcus lactis subsp. cremoris (Streptococcus cremoris)).